An 811-amino-acid chain; its full sequence is Elongation factor G, mitochondrial (811 aa).

A mitochondrion-targeting transit peptide spans 1–64; that stretch reads MSAIARAAAR…FQQSFQRRWA (64 aa). The region spanning 96 to 394 is the tr-type G domain; sequence RRQRNVGISA…GVCAYLPNPS (299 aa). GTP contacts are provided by residues 105 to 112, 192 to 196, and 246 to 249; these read AHIDSGKT, DTPGH, and NKMD.

The protein belongs to the TRAFAC class translation factor GTPase superfamily. Classic translation factor GTPase family. EF-G/EF-2 subfamily.

The protein resides in the mitochondrion. It functions in the pathway protein biosynthesis; polypeptide chain elongation. In terms of biological role, mitochondrial GTPase that catalyzes the GTP-dependent ribosomal translocation step during translation elongation. During this step, the ribosome changes from the pre-translocational (PRE) to the post-translocational (POST) state as the newly formed A-site-bound peptidyl-tRNA and P-site-bound deacylated tRNA move to the P and E sites, respectively. Catalyzes the coordinated movement of the two tRNA molecules, the mRNA and conformational changes in the ribosome. The sequence is that of Elongation factor G, mitochondrial from Cryptococcus neoformans var. neoformans serotype D (strain JEC21 / ATCC MYA-565) (Filobasidiella neoformans).